The sequence spans 452 residues: Transcription factor ETV6 (452 aa).

The residue at position 11 (K11) is an N6-acetyllysine; alternate. K11 participates in a covalent cross-link: Glycyl lysine isopeptide (Lys-Gly) (interchain with G-Cter in SUMO2); alternate. At T18 the chain carries Phosphothreonine. The residue at position 22 (S22) is a Phosphoserine. A PNT domain is found at 40 to 124 (ALRMEEDSIR…ELLQHILKQR (85 aa)). Positions 154–262 (EDNGVQRTSR…PRPSSPRQEG (109 aa)) are disordered. Positions 158–174 (VQRTSRPSAENVHQNPP) are enriched in polar residues. 3 positions are modified to phosphoserine: S213, S238, and S257. A Glycyl lysine isopeptide (Lys-Gly) (interchain with G-Cter in SUMO2) cross-link involves residue K288. An N6-acetyllysine; alternate modification is found at K302. K302 is covalently cross-linked (Glycyl lysine isopeptide (Lys-Gly) (interchain with G-Cter in SUMO2); alternate). S323 bears the Phosphoserine mark. The segment at residues 339–420 (RLLWDYVYQL…PGQRLLFRFM (82 aa)) is a DNA-binding region (ETS). Glycyl lysine isopeptide (Lys-Gly) (interchain with G-Cter in SUMO2) cross-links involve residues K403 and K421.

It belongs to the ETS family. In terms of assembly, can form homodimers or heterodimers with TEL2 or FLI1. Interacts with L3MBTL1 and HDAC9.

It localises to the nucleus. Transcriptional repressor; binds to the DNA sequence 5'-CCGGAAGT-3'. Plays a role in hematopoiesis and malignant transformation. This Bos taurus (Bovine) protein is Transcription factor ETV6 (ETV6).